We begin with the raw amino-acid sequence, 980 residues long: Phosphoenolpyruvate carboxylase (980 aa).

Catalysis depends on residues His182 and Lys625.

It belongs to the PEPCase type 1 family. It depends on Mg(2+) as a cofactor.

It catalyses the reaction oxaloacetate + phosphate = phosphoenolpyruvate + hydrogencarbonate. Forms oxaloacetate, a four-carbon dicarboxylic acid source for the tricarboxylic acid cycle. In Bordetella pertussis (strain Tohama I / ATCC BAA-589 / NCTC 13251), this protein is Phosphoenolpyruvate carboxylase.